The following is a 652-amino-acid chain: MNKRMNELVALLNRYATEYYTSDNPSVSDSEYDRLYRELVELETAYPEQVLADSPTHRVGGKVLDGFEKYSHQYPLYSLQDAFSREELDAFDARVRKEVAHPTYICELKIDGLSISLTYEKGILVAGVTRGDGSIGENITENLKRVKDIPLTLPEELDITVRGECYMPRASFDQVNQARQENGEPEFANPRNAAAGTLRQLDTAVVAKRNLATFLYQEASPSTRDSQEKGLKYLEQLGFVVNPKRILAENIDEIWNFIQEVGQERENLPYDIDGVVIKVNDLASQEELGFTVKAPKWAVAYKFPAEEKEAQLLSVDWTVGRTGVVTPTANLTPVQLAGTTVSRATLHNVDYIAEKDIRKDDTVIVYKAGDIIPAVLRVVESKRVSEEKLDIPTNCPSCNSDLLHFEDEVALRCINPRCPAQIMEGLIHFASRDAMNITGLGPSIVEKLFAANLVKDVADIYRLQEEDFLLLEGVKEKSAAKLYQAIQASKENSAEKLLFGLGIRHVGSKASQLLLQYFHSIENLYQADSEEVASIESLGGVIAKSLQTYFAAEGSEILLRELKETGVNLDYKGQTVVADAALSGLTVVLTGKLERLKRSEAKSKLESLGAKVTGSVSKKTDLVVVGADAGSKLQKAQELGIQVRDEAWLESL.

NAD(+) is bound by residues 29–33, 78–79, and Glu107; these read DSEYD and SL. The active-site N6-AMP-lysine intermediate is Lys109. 4 residues coordinate NAD(+): Arg130, Glu164, Lys278, and Lys302. Residues Cys395, Cys398, Cys413, and Cys418 each contribute to the Zn(2+) site. Positions 577–652 constitute a BRCT domain; that stretch reads VADAALSGLT…VRDEAWLESL (76 aa).

It belongs to the NAD-dependent DNA ligase family. LigA subfamily. It depends on Mg(2+) as a cofactor. Mn(2+) serves as cofactor.

It catalyses the reaction NAD(+) + (deoxyribonucleotide)n-3'-hydroxyl + 5'-phospho-(deoxyribonucleotide)m = (deoxyribonucleotide)n+m + AMP + beta-nicotinamide D-nucleotide.. In terms of biological role, DNA ligase that catalyzes the formation of phosphodiester linkages between 5'-phosphoryl and 3'-hydroxyl groups in double-stranded DNA using NAD as a coenzyme and as the energy source for the reaction. It is essential for DNA replication and repair of damaged DNA. This is DNA ligase from Streptococcus pneumoniae serotype 2 (strain D39 / NCTC 7466).